Reading from the N-terminus, the 1082-residue chain is TNF receptor-associated factor homolog 1b (1082 aa).

The tract at residues 1–54 (MAEAVDEDSGVGRSLEESSNGQHSQAGEALSEWRSSGQVENGTPSTSPSYWDID) is disordered. N-acetylalanine is present on Ala-2. The span at 33–49 (WRSSGQVENGTPSTSPS) shows a compositional bias: polar residues. Positions 67–198 (YGQYTWKIPK…SGCLTIEAKV (132 aa)) constitute an MATH domain. Disordered regions lie at residues 358-388 (LPPKDEKGRQNRTKDGNDGEEVNKEADERDE), 440-666 (TEQR…SNVG), 697-762 (SIVN…QVVL), 780-800 (LSAPKQPPATTISRPSSAPII), 812-841 (SSVQTTTSLPRSVSSAGRLGPDPSLHNQQT), and 858-889 (SSSSSFNHHPSSHGVVPTTLPSSSYSQAPTSS). Composition is skewed to basic and acidic residues over residues 359–388 (PPKDEKGRQNRTKDGNDGEEVNKEADERDE) and 440–453 (TEQRAKRGAAEREK). Residues 446 to 507 (RGAAEREKKS…EEEKDSVTEK (62 aa)) are a coiled coil. The span at 454 to 471 (KSKKKQAKQKRNKNKGKD) shows a compositional bias: basic residues. The segment covering 472–488 (KRKEEKVSFATHAKDLE) has biased composition (basic and acidic residues). Composition is skewed to low complexity over residues 519 to 534 (GDVSDISDSVDGSADI) and 560 to 573 (SSEGSSRGRGISIS). 2 stretches are compositionally biased toward polar residues: residues 588-630 (DDSS…QQVK) and 645-666 (QPSTLGTDPKGQNYSSEASNVG). Low complexity-rich tracts occupy residues 858-871 (SSSSSFNHHPSSHG) and 878-889 (PSSSYSQAPTSS).

As to quaternary structure, forms homooligomers. Interacts with SNC1, RPS2 and CPR1/CPR30. Interacts with ATG6.

Its subcellular location is the cytoplasm. It is found in the cell membrane. Functions redundantly with TRAF1A in the regulation of plant immune response. Contributes to the turnover of the nucleotide-binding domain and leucine-rich repeat-containing (NB-LRR) immune receptors SNC1 and RPS2. May associate with an E3 ubiquitin-protein ligase complex, which modulates ubiquitination and subsequent degradation of NB-LRR immune sensors to maintain their homeostasis. Functions redundantly with TRAF1A in the regulation of autophagosome formation. Required for SINAT1- and SINAT2-mediated ubiquitination and destabilization of ATG6. Functions as a molecular adapter that helps to regulate autophagy by modulating ATG6 stability. The protein is TNF receptor-associated factor homolog 1b of Arabidopsis thaliana (Mouse-ear cress).